Here is an 89-residue protein sequence, read N- to C-terminus: Alpha-latrotoxin associated low molecular weight protein SGV242-280 (89 aa).

The signal sequence occupies residues 1–18 (MSKLHFLILLSVIVSVFC).

The protein belongs to the arthropod CHH/MIH/GIH/VIH hormone family. In terms of tissue distribution, expressed by the venom gland.

It localises to the secreted. May increase the toxicity of alpha-latrotoxin and/or other venom components. Is non-toxic to mice and to the cockroach Periplaneta americana. The sequence is that of Alpha-latrotoxin associated low molecular weight protein SGV242-280 from Steatoda grossa (False black widow).